Here is a 284-residue protein sequence, read N- to C-terminus: Serine protease 57 (284 aa).

The N-terminal stretch at 1 to 35 (MPSSTAMVPGTRGGWHCLVLTTAAALTQLMWLPGC) is a signal peptide. One can recognise a Peptidase S1 domain in the interval 40 to 269 (IVGGHEVTPH…FVTWIWDVVR (230 aa)). The cysteines at positions 65 and 81 are disulfide-linked. Residues histidine 80 and aspartate 128 each act as charge relay system in the active site. Asparagine 135 is a glycosylation site (N-linked (GlcNAc...) asparagine). Cystine bridges form between cysteine 163–cysteine 230, cysteine 194–cysteine 208, and cysteine 220–cysteine 245. Serine 224 acts as the Charge relay system in catalysis.

It belongs to the peptidase S1 family. After cleavage of the signal peptide, the N-terminus is probably further processed by CTSC. Processing by CTSC is probably required for accumulation in cytoplasmic granules; in the absence of CTSC the protein does not accumulate. In terms of processing, N-glycosylated.

It localises to the cytoplasmic granule lumen. The protein localises to the secreted. Its function is as follows. Serine protease that cleaves preferentially after Arg residues. Can also cleave after citrulline (deimidated arginine) and methylarginine residues. This is Serine protease 57 (Prss57) from Mus musculus (Mouse).